Here is an 822-residue protein sequence, read N- to C-terminus: Dextranase (822 aa).

The first 38 residues, 1–38 (MTVNLTLQHASEIIGQDNVDLTLAAGASAKVSNLTVAS), serve as a signal peptide directing secretion. Disordered regions lie at residues 607 to 669 (EPVT…VDEL) and 683 to 788 (ETAH…ETTS). Residues 619–636 (NTVTSEASSETAKSENTT) are compositionally biased toward low complexity. Positions 693 to 705 (SVSNTDQGTVASD) are enriched in polar residues. The span at 706-761 (SITTPASEAASTAASTVSSEVSESVTVSSEPSETENSSEASTSESATPTTTAISES) shows a compositional bias: low complexity. The segment covering 771–788 (LTESESQASTSLVSETTS) has biased composition (polar residues).

Belongs to the glycosyl hydrolase 66 family.

The catalysed reaction is Endohydrolysis of (1-&gt;6)-alpha-D-glucosidic linkages in dextran.. This is Dextranase (dex) from Streptococcus salivarius.